The primary structure comprises 44 residues: Cytochrome b559 subunit beta (44 aa).

A helical transmembrane segment spans residues 19–35 (WLAVHTLAVPTVFFIGA). H23 lines the heme pocket.

It belongs to the PsbE/PsbF family. As to quaternary structure, heterodimer of an alpha subunit and a beta subunit. PSII is composed of 1 copy each of membrane proteins PsbA, PsbB, PsbC, PsbD, PsbE, PsbF, PsbH, PsbI, PsbJ, PsbK, PsbL, PsbM, PsbT, PsbX, PsbY, PsbZ, Psb30/Ycf12, peripheral proteins PsbO, CyanoQ (PsbQ), PsbU, PsbV and a large number of cofactors. It forms dimeric complexes. Requires heme b as cofactor.

The protein resides in the cellular thylakoid membrane. This b-type cytochrome is tightly associated with the reaction center of photosystem II (PSII). PSII is a light-driven water:plastoquinone oxidoreductase that uses light energy to abstract electrons from H(2)O, generating O(2) and a proton gradient subsequently used for ATP formation. It consists of a core antenna complex that captures photons, and an electron transfer chain that converts photonic excitation into a charge separation. This chain is Cytochrome b559 subunit beta, found in Gloeothece citriformis (strain PCC 7424) (Cyanothece sp. (strain PCC 7424)).